A 542-amino-acid polypeptide reads, in one-letter code: Calcium-dependent protein kinase 15 (542 aa).

Residues 1 to 73 form a disordered region; sequence MGARASRHRQ…QAPQQAAAED (73 aa). Residue glycine 2 is the site of N-myristoyl glycine attachment. Over residues 12-21 the composition is skewed to low complexity; that stretch reads PDQSQSQSPS. A compositionally biased stretch (basic residues) spans 22 to 40; the sequence is PHHKHHHHHQTTRAPKPKP. Over residues 41–60 the composition is skewed to pro residues; it reads KPQPPPPQQPRSQPPPPPRH. Residues 61–71 show a composition bias toward low complexity; the sequence is QPQQAPQQAAA. Positions 90 to 348 constitute a Protein kinase domain; sequence YTFGRELGRG…AAEILNHPWI (259 aa). Residues 96–104 and lysine 119 each bind ATP; that span reads LGRGQFGVT. Aspartate 214 (proton acceptor) is an active-site residue. Residues 354-384 are autoinhibitory domain; sequence APDKPLDITVISRMKQFRAMNKLKKVALKVV. 4 EF-hand domains span residues 391 to 426, 427 to 462, 463 to 497, and 498 to 533; these read EEIV…LGTK, ISES…MNRL, EKED…KYDM, and GDEA…NSPE. Ca(2+) is bound by residues aspartate 404, aspartate 406, serine 408, threonine 410, glutamate 415, aspartate 440, aspartate 442, asparagine 444, serine 446, glutamate 451, aspartate 476, aspartate 478, serine 480, glutamate 487, aspartate 511, aspartate 513, aspartate 515, arginine 517, and glutamate 522.

The protein belongs to the protein kinase superfamily. Ser/Thr protein kinase family. CDPK subfamily.

It is found in the membrane. The enzyme catalyses L-seryl-[protein] + ATP = O-phospho-L-seryl-[protein] + ADP + H(+). It catalyses the reaction L-threonyl-[protein] + ATP = O-phospho-L-threonyl-[protein] + ADP + H(+). Activated by calcium. Autophosphorylation may play an important role in the regulation of the kinase activity. Functionally, may play a role in signal transduction pathways that involve calcium as a second messenger. The protein is Calcium-dependent protein kinase 15 of Oryza sativa subsp. japonica (Rice).